Consider the following 71-residue polypeptide: uncharacterized protein (71 aa).

This is an uncharacterized protein from Cassava vein mosaic virus (CsVMV).